A 700-amino-acid polypeptide reads, in one-letter code: DNA ligase (700 aa).

NAD(+)-binding positions include 42–46 (DDEYD), 91–92 (SL), and E126. K128 acts as the N6-AMP-lysine intermediate in catalysis. Positions 149, 184, 300, and 324 each coordinate NAD(+). Zn(2+)-binding residues include C418, C421, C436, and C441. The region spanning 598–686 (TRTDQLSGLN…GLGERGVAED (89 aa)) is the BRCT domain.

Belongs to the NAD-dependent DNA ligase family. LigA subfamily. Mn(2+) is required as a cofactor.

It catalyses the reaction NAD(+) + (deoxyribonucleotide)n-3'-hydroxyl + 5'-phospho-(deoxyribonucleotide)m = (deoxyribonucleotide)n+m + AMP + beta-nicotinamide D-nucleotide.. Functionally, DNA ligase that catalyzes the formation of phosphodiester linkages between 5'-phosphoryl and 3'-hydroxyl groups in double-stranded DNA using NAD as a coenzyme and as the energy source for the reaction. It is essential for DNA replication and repair of damaged DNA. This is DNA ligase from Deinococcus radiodurans (strain ATCC 13939 / DSM 20539 / JCM 16871 / CCUG 27074 / LMG 4051 / NBRC 15346 / NCIMB 9279 / VKM B-1422 / R1).